We begin with the raw amino-acid sequence, 163 residues long: Shikimate kinase (163 aa).

10-15 (GVGKTT) contributes to the ATP binding site. T14 contacts Mg(2+). Substrate is bound by residues D28, R52, and G75. R116 contributes to the ATP binding site. R134 is a substrate binding site. R151 contacts ATP.

The protein belongs to the shikimate kinase family. As to quaternary structure, monomer. It depends on Mg(2+) as a cofactor.

It is found in the cytoplasm. The enzyme catalyses shikimate + ATP = 3-phosphoshikimate + ADP + H(+). It participates in metabolic intermediate biosynthesis; chorismate biosynthesis; chorismate from D-erythrose 4-phosphate and phosphoenolpyruvate: step 5/7. Catalyzes the specific phosphorylation of the 3-hydroxyl group of shikimic acid using ATP as a cosubstrate. This is Shikimate kinase from Streptococcus pyogenes serotype M49 (strain NZ131).